We begin with the raw amino-acid sequence, 379 residues long: Oxidoreductase chry3 (379 aa).

Disordered stretches follow at residues 1 to 23 and 126 to 150; these read MTTA…QPTP and EGDD…TSHM. Positions 126-138 are enriched in acidic residues; the sequence is EGDDSAPAEEEAD.

Belongs to the asaB hydroxylase/desaturase family.

The protein operates within pigment biosynthesis. Functionally, oxidoreductase; part of the gene cluster that mediates the biosynthesis of the yellow pigment chrysogine. Pyruvic acid and anthranilic acid are likely substrates for the nonribosomal peptide synthetase chry1/NRPS14, with pyruvic acid adenylated by the first A domain and anthranilic acid by the second. If pyruvic acid and anthranilic acid are merged and released from chry1/NRPS14 by hydrolysis, a subsequent amidation would lead to 2-pyruvoylaminobenzamide. This process is probably catalyzed by the amidotransferase chry2 using glutamine as amino donor. The dehydrogenase chry5 that has a terminal berberine bridge domain for C-N cyclization could catalyze the cyclization of 2-pyruvoylaminobenzamide to yield acetyl-4(3H)-quinazolidinone. A final reduction of acetyl-4(3H)-quinazolidinone catalyzed by the oxidoreductase chry4 would result in chrysogine. This chain is Oxidoreductase chry3, found in Gibberella zeae (strain ATCC MYA-4620 / CBS 123657 / FGSC 9075 / NRRL 31084 / PH-1) (Wheat head blight fungus).